Here is a 261-residue protein sequence, read N- to C-terminus: Transmembrane protein 106A (261 aa).

The helical transmembrane segment at 95–115 (VFLAVSICLVTSSLIIFFLFP) threads the bilayer.

This sequence belongs to the TMEM106 family.

It localises to the cell membrane. Functionally, activates macrophages and polarizes them into M1-like macrophages through the activation of the MAPK and NF-kappaB signaling pathway. Upon activation, up-regulates the expression of CD80, CD86, CD69 and MHC II on macrophages, and induces the release of pro-inflammatory cytokines such as TNF, IL1B, IL6, CCL2 and nitric oxide. May play a role in inhibition of proliferation and migration. This Bos taurus (Bovine) protein is Transmembrane protein 106A (TMEM106A).